Reading from the N-terminus, the 233-residue chain is DNA repair protein RecO (233 aa).

It belongs to the RecO family.

Involved in DNA repair and RecF pathway recombination. The polypeptide is DNA repair protein RecO (Francisella philomiragia subsp. philomiragia (strain ATCC 25017 / CCUG 19701 / FSC 153 / O#319-036)).